The sequence spans 281 residues: Nucleotide-binding protein CTN_0898 (281 aa).

9–16 (GLSGAGKT) provides a ligand contact to ATP. 58–61 (DVRS) contributes to the GTP binding site.

This sequence belongs to the RapZ-like family.

In terms of biological role, displays ATPase and GTPase activities. This is Nucleotide-binding protein CTN_0898 from Thermotoga neapolitana (strain ATCC 49049 / DSM 4359 / NBRC 107923 / NS-E).